A 278-amino-acid polypeptide reads, in one-letter code: Undecaprenyl-diphosphatase 1 (278 aa).

The next 6 helical transmembrane spans lie at 45 to 65 (AVIGFSAVIQVGAIAAVLVYF), 95 to 115 (WWVIYATIPIVLVGLAAKPLI), 119 to 139 (LASLWVVAGSLIVGSGVMWWA), 191 to 211 (VAATRLSFFLGIPALTGAGLY), 225 to 245 (PLAVGTLVSFVVAYASIAWLL), and 256 to 276 (FVVYRIAVGVLLFGLLGTGVL).

This sequence belongs to the UppP family.

The protein localises to the cell membrane. It carries out the reaction di-trans,octa-cis-undecaprenyl diphosphate + H2O = di-trans,octa-cis-undecaprenyl phosphate + phosphate + H(+). Its function is as follows. Catalyzes the dephosphorylation of undecaprenyl diphosphate (UPP). Confers resistance to bacitracin. The polypeptide is Undecaprenyl-diphosphatase 1 (Streptomyces coelicolor (strain ATCC BAA-471 / A3(2) / M145)).